A 633-amino-acid chain; its full sequence is Laccase ARB_05828 (633 aa).

Residues 1-16 form the signal peptide; it reads MKRLGLAALYIGSALA. Positions 22–47 are excised as a propeptide; it reads GPPSRNVPRDDFPMFNPLPSTDLNTR. N-linked (GlcNAc...) asparagine glycosylation is present at N143. Residues H148, H150, H192, and H194 each contribute to the Cu cation site. A disulfide bridge links C169 with C607. Residues 224–353 form the Plastocyanin-like domain; that stretch reads LLMTDHLHSS…GRYWVRTTPA (130 aa). N286 and N456 each carry an N-linked (GlcNAc...) asparagine glycan. Positions 508, 511, 513, 568, 569, 570, and 574 each coordinate Cu cation.

It belongs to the multicopper oxidase family. Monomer. Cu cation is required as a cofactor.

The protein resides in the secreted. It carries out the reaction 4 hydroquinone + O2 = 4 benzosemiquinone + 2 H2O. This is Laccase ARB_05828 from Arthroderma benhamiae (strain ATCC MYA-4681 / CBS 112371) (Trichophyton mentagrophytes).